The following is a 441-amino-acid chain: 3'-N-debenzoyl-2'-deoxytaxol N-benzoyltransferase (441 aa).

Active-site proton acceptor residues include H163 and D373.

Belongs to the plant acyltransferase family.

The catalysed reaction is 3'-N-debenzoyltaxol + benzoyl-CoA = paclitaxel + CoA + H(+). The protein operates within alkaloid biosynthesis; taxol biosynthesis. In terms of biological role, catalyzes the stereoselective coupling of the surrogate substrate N-debenzoyl-(3'RS)-2'-deoxytaxol with benzoyl-CoA to form predominantly one 3'-epimer of 2'-deoxytaxol. This enzymatic reaction constitutes the final acylation in the taxol biosynthetic pathway. The polypeptide is 3'-N-debenzoyl-2'-deoxytaxol N-benzoyltransferase (Taxus canadensis (Canadian yew)).